Reading from the N-terminus, the 165-residue chain is Protein SprT (165 aa).

Residues glutamate 20–valine 163 form the SprT-like domain. Histidine 78 serves as a coordination point for Zn(2+). Glutamate 79 is a catalytic residue. Histidine 82 is a binding site for Zn(2+).

This sequence belongs to the SprT family. Zn(2+) serves as cofactor.

The protein resides in the cytoplasm. This is Protein SprT from Escherichia coli O139:H28 (strain E24377A / ETEC).